The sequence spans 155 residues: Ribosomal RNA large subunit methyltransferase H (155 aa).

S-adenosyl-L-methionine contacts are provided by residues Leu72, Gly103, and 122–127 (LSPLTL).

It belongs to the RNA methyltransferase RlmH family. Homodimer.

It localises to the cytoplasm. The catalysed reaction is pseudouridine(1915) in 23S rRNA + S-adenosyl-L-methionine = N(3)-methylpseudouridine(1915) in 23S rRNA + S-adenosyl-L-homocysteine + H(+). In terms of biological role, specifically methylates the pseudouridine at position 1915 (m3Psi1915) in 23S rRNA. The sequence is that of Ribosomal RNA large subunit methyltransferase H from Haemophilus ducreyi (strain 35000HP / ATCC 700724).